Consider the following 180-residue polypeptide: Large ribosomal subunit protein uL6 (180 aa).

This sequence belongs to the universal ribosomal protein uL6 family. Part of the 50S ribosomal subunit.

Functionally, this protein binds to the 23S rRNA, and is important in its secondary structure. It is located near the subunit interface in the base of the L7/L12 stalk, and near the tRNA binding site of the peptidyltransferase center. The sequence is that of Large ribosomal subunit protein uL6 from Mycoplasma capricolum subsp. capricolum (strain California kid / ATCC 27343 / NCTC 10154).